A 201-amino-acid chain; its full sequence is MKWIGLTGGIACGKSTVSRMLRTHDIPVVDADEIAKEVVKPGSAGLKSVIQEFGPEFLTADGALDRRKLGQKVFGHPELLHKLEAITHPLIREETRRRRRLYEDMGHKLAIYDIPLLFETRAKDQFDGVIVVACTKEQQKERLRRQNWSEDEIEMRIASQIPIQFKEQQADFVLHNNRDEQHLLREVDRVLKWLEELKNQN.

The 199-residue stretch at 3–201 (WIGLTGGIAC…KWLEELKNQN (199 aa)) folds into the DPCK domain. Position 11–16 (11–16 (ACGKST)) interacts with ATP.

The protein belongs to the CoaE family.

Its subcellular location is the cytoplasm. It catalyses the reaction 3'-dephospho-CoA + ATP = ADP + CoA + H(+). It functions in the pathway cofactor biosynthesis; coenzyme A biosynthesis; CoA from (R)-pantothenate: step 5/5. Catalyzes the phosphorylation of the 3'-hydroxyl group of dephosphocoenzyme A to form coenzyme A. The sequence is that of Dephospho-CoA kinase from Bdellovibrio bacteriovorus (strain ATCC 15356 / DSM 50701 / NCIMB 9529 / HD100).